Here is a 92-residue protein sequence, read N- to C-terminus: Beta-2-microglobulin (92 aa).

Residues 2–89 enclose the Ig-like C1-type domain; sequence PQIQVYSRHP…NHVSMDKPMT (88 aa). Cys-22 and Cys-77 form a disulfide bridge.

This sequence belongs to the beta-2-microglobulin family. In terms of assembly, heterodimer of an alpha chain and a beta chain. Beta-2-microglobulin is the beta-chain of major histocompatibility complex class I molecules.

The protein resides in the secreted. Functionally, component of the class I major histocompatibility complex (MHC). Involved in the presentation of peptide antigens to the immune system. The polypeptide is Beta-2-microglobulin (B2m) (Mus spretus (Western Mediterranean mouse)).